The sequence spans 193 residues: Potassium-transporting ATPase KdpC subunit (193 aa).

The chain crosses the membrane as a helical span at residues 11–31 (FTLVFMVLLGLVYPFVMTGIA).

It belongs to the KdpC family. In terms of assembly, the system is composed of three essential subunits: KdpA, KdpB and KdpC.

It is found in the cell membrane. In terms of biological role, part of the high-affinity ATP-driven potassium transport (or Kdp) system, which catalyzes the hydrolysis of ATP coupled with the electrogenic transport of potassium into the cytoplasm. This subunit acts as a catalytic chaperone that increases the ATP-binding affinity of the ATP-hydrolyzing subunit KdpB by the formation of a transient KdpB/KdpC/ATP ternary complex. This Caldanaerobacter subterraneus subsp. tengcongensis (strain DSM 15242 / JCM 11007 / NBRC 100824 / MB4) (Thermoanaerobacter tengcongensis) protein is Potassium-transporting ATPase KdpC subunit.